A 225-amino-acid chain; its full sequence is Glutathione S-transferase Mu 3 (225 aa).

One can recognise a GST N-terminal domain in the interval 5–92 (SSMVLGYWDI…YIARKHNMCG (88 aa)). Glutathione contacts are provided by residues 11–12 (YW), 50–54 (WLDVK), and 63–64 (NL). Residue Lys-54 forms a Glycyl lysine isopeptide (Lys-Gly) (interchain with G-Cter in SUMO2) linkage. Residue Lys-73 forms a Glycyl lysine isopeptide (Lys-Gly) (interchain with G-Cter in SUMO2) linkage. 76–77 (QS) contacts glutathione. Residues 94–212 (TEEEKIRVDI…QSDQFCKMPI (119 aa)) form the GST C-terminal domain. Tyr-120 is a binding site for substrate.

This sequence belongs to the GST superfamily. Mu family. In terms of assembly, homodimer. The N-terminus is blocked. In terms of tissue distribution, testis and brain.

Its subcellular location is the cytoplasm. The enzyme catalyses RX + glutathione = an S-substituted glutathione + a halide anion + H(+). In terms of biological role, conjugation of reduced glutathione to a wide number of exogenous and endogenous hydrophobic electrophiles. May govern uptake and detoxification of both endogenous compounds and xenobiotics at the testis and brain blood barriers. In Homo sapiens (Human), this protein is Glutathione S-transferase Mu 3 (GSTM3).